The sequence spans 161 residues: Regulator of ribonuclease activity A (161 aa).

The protein belongs to the RraA family. Homotrimer. Binds to both RNA-binding sites in the C-terminal region of Rne and to RhlB.

It is found in the cytoplasm. Globally modulates RNA abundance by binding to RNase E (Rne) and regulating its endonucleolytic activity. Can modulate Rne action in a substrate-dependent manner by altering the composition of the degradosome. Modulates RNA-binding and helicase activities of the degradosome. The sequence is that of Regulator of ribonuclease activity A from Alteromonas mediterranea (strain DSM 17117 / CIP 110805 / LMG 28347 / Deep ecotype).